The chain runs to 235 residues: Ribosomal RNA small subunit methyltransferase G (235 aa).

S-adenosyl-L-methionine is bound by residues Gly74, Leu79, 124-125 (AE), and Arg142. Residues 211–235 (RRRAAKPGRNKSGRTARSRGRTGRR) form a disordered region. The segment covering 213–235 (RAAKPGRNKSGRTARSRGRTGRR) has biased composition (basic residues).

Belongs to the methyltransferase superfamily. RNA methyltransferase RsmG family.

The protein resides in the cytoplasm. Its function is as follows. Specifically methylates the N7 position of guanine in position 518 of 16S rRNA. The protein is Ribosomal RNA small subunit methyltransferase G of Mycolicibacterium smegmatis (strain ATCC 700084 / mc(2)155) (Mycobacterium smegmatis).